The sequence spans 781 residues: Arf-GAP with coiled-coil, ANK repeat and PH domain-containing protein 2 (781 aa).

The 226-residue stretch at 1–226 (MKVTVDFEEC…MKDLGAQLDQ (226 aa)) folds into the BAR domain. The region spanning 266 to 361 (GIVMEGYLFK…WIKAVQTSIA (96 aa)) is the PH domain. The segment covering 365–378 (REKGDESEKQEKKS) has biased composition (basic and acidic residues). A disordered region spans residues 365 to 390 (REKGDESEKQEKKSSPSTGSLESGSE). The span at 379–388 (SPSTGSLESG) shows a compositional bias: low complexity. Residues 399 to 521 (ESALQRVQCI…KFVEKQPAAA (123 aa)) form the Arf-GAP domain. Residues 414–437 (CCDCGLADPRWASINLGITLCIEC) form a C4-type zinc finger. Residues 520–576 (AAVSPLESRTKVLPQSQEEKRHSAPEKSFLAIEQGAASPRVRSSDSGIQQSVDDSRE) are disordered. ANK repeat units follow at residues 642–671 (NKAT…NVNI), 675–704 (KGRG…NQHA), and 708–737 (DGKD…NEEM).

The protein localises to the endosome membrane. Its subcellular location is the cell membrane. Its activity is regulated as follows. GAP activity stimulated by phosphatidylinositol 4,5-bisphosphate (PIP2) and phosphatidic acid. GTPase-activating protein (GAP) for ADP ribosylation factor 6 (ARF6). This chain is Arf-GAP with coiled-coil, ANK repeat and PH domain-containing protein 2 (ACAP2), found in Gallus gallus (Chicken).